Consider the following 413-residue polypeptide: Phosphopentomutase (413 aa).

6 residues coordinate Mn(2+): Asp11, Asp306, His311, Asp347, His348, and His359.

It belongs to the phosphopentomutase family. Mn(2+) serves as cofactor.

It localises to the cytoplasm. The catalysed reaction is 2-deoxy-alpha-D-ribose 1-phosphate = 2-deoxy-D-ribose 5-phosphate. It catalyses the reaction alpha-D-ribose 1-phosphate = D-ribose 5-phosphate. The protein operates within carbohydrate degradation; 2-deoxy-D-ribose 1-phosphate degradation; D-glyceraldehyde 3-phosphate and acetaldehyde from 2-deoxy-alpha-D-ribose 1-phosphate: step 1/2. Functionally, isomerase that catalyzes the conversion of deoxy-ribose 1-phosphate (dRib-1-P) and ribose 1-phosphate (Rib-1-P) to deoxy-ribose 5-phosphate (dRib-5-P) and ribose 5-phosphate (Rib-5-P), respectively. The protein is Phosphopentomutase of Helicobacter pylori (strain G27).